The primary structure comprises 61 residues: Large ribosomal subunit protein uL30 (61 aa).

Belongs to the universal ribosomal protein uL30 family. In terms of assembly, part of the 50S ribosomal subunit.

In Rubrobacter xylanophilus (strain DSM 9941 / JCM 11954 / NBRC 16129 / PRD-1), this protein is Large ribosomal subunit protein uL30.